Here is a 395-residue protein sequence, read N- to C-terminus: MKRFLLCSFALVLLYPAGIDMYLVGLPRIAADLNASEAQLHIAFSVYLAGMATAMLFAGKIADQSGRKPVAIVGAIVFMMASLLCSRASEGSLFLSGRFLQGIGAGGCYVVAFAILRDTLDEHRRAKVLSLLNGITCIVPVLAPVVGHLIMLRFPWQSLFYTMSAMGIIVGLLSLFILRETRPVRLAPRDLSRSSPAAESLINRFFVSRLAITTLSVSVILTFVNASPVLLMEVMGFSRGDYAITMALTAGVSMVVSFSTPFALGLFKPRTLMLVSQGLFLTAGVTLSLAHTNTVTLFGLTLICAGFSVGFGVAMSQALGPFSLRAGVASSTLGIAQVCGSSLWIWLAAILGISAMNMLIGILIGCSIVSILLIFSVTPNRSVAEHEEIPYQSRP.

12 helical membrane passes run 4-24, 42-62, 69-89, 93-113, 131-151, 158-178, 217-237, 247-267, 271-291, 295-315, 328-350, and 355-377; these read FLLC…MYLV, IAFS…GKIA, PVAI…SRAS, LFLS…VVAF, LLNG…HLIM, SLFY…LFIL, VSVI…VMGF, ALTA…LGLF, TLML…SLAH, VTLF…GVAM, VASS…LAAI, and AMNM…IFSV.

This sequence belongs to the major facilitator superfamily. DHA1 family. MdtL (TC 2.A.1.2.22) subfamily.

The protein resides in the cell inner membrane. This chain is Multidrug resistance protein MdtL, found in Salmonella dublin (strain CT_02021853).